The chain runs to 795 residues: Phenylalanine--tRNA ligase beta subunit (795 aa).

In terms of domain architecture, tRNA-binding spans 39–148 (AGAFHGVVVG…ADAPIGTDIR (110 aa)). The B5 domain occupies 401–476 (PTRATITLRR…RIYGYNNIPN (76 aa)). Positions 454, 460, 463, and 464 each coordinate Mg(2+). The region spanning 701 to 794 (SRFPANRRDI…LKQRFQASLR (94 aa)) is the FDX-ACB domain.

It belongs to the phenylalanyl-tRNA synthetase beta subunit family. Type 1 subfamily. Tetramer of two alpha and two beta subunits. Mg(2+) is required as a cofactor.

The protein resides in the cytoplasm. It catalyses the reaction tRNA(Phe) + L-phenylalanine + ATP = L-phenylalanyl-tRNA(Phe) + AMP + diphosphate + H(+). In Pectobacterium atrosepticum (strain SCRI 1043 / ATCC BAA-672) (Erwinia carotovora subsp. atroseptica), this protein is Phenylalanine--tRNA ligase beta subunit.